The sequence spans 94 residues: Beta-diguetoxin-Dc1a (94 aa).

A signal peptide spans 1–17 (MKVFVVLLCLSLAAVYA). Residues 18-38 (LEERLDKDADIMLDSPADMER) constitute a propeptide that is removed on maturation. 4 disulfide bridges follow: Cys-50–Cys-63, Cys-57–Cys-77, Cys-62–Cys-91, and Cys-79–Cys-89.

It belongs to the neurotoxin 26 (DTX) family. In terms of tissue distribution, expressed by the venom gland.

Its subcellular location is the secreted. Functionally, insecticidal toxin. This toxin promotes opening of insect Nav channels. The toxin binds to the S1-S2 and S3-S4 loops in the domain II voltage-sensor of insect Nav channels (i.e., receptor site 4). The American cockroach P.americana is largely resistant to the effects of this toxin due to an unusual sequence within the domain II S1-S2 loop. In vivo, paralyzes lepidopteran and dipteran larvae. Paralyzed insects ultimately die from secondary effects of starvation and dehydration. The chain is Beta-diguetoxin-Dc1a from Diguetia canities (Desert bush spider).